Reading from the N-terminus, the 517-residue chain is Nicotine N-demethylase CYP82E4 (517 aa).

Residues Val-2 to Trp-22 traverse the membrane as a helical segment. Residue Lys-254 forms a Glycyl lysine isopeptide (Lys-Gly) (interchain with G-Cter in ubiquitin) linkage. Cys-457 contacts heme.

It belongs to the cytochrome P450 family. CYP82E2 subfamily. The cofactor is heme. As to expression, expressed at low levels in green leaves.

Its subcellular location is the membrane. It carries out the reaction (S)-nicotine + reduced [NADPH--hemoprotein reductase] + O2 = (S)-nornicotine + formaldehyde + oxidized [NADPH--hemoprotein reductase] + H2O + H(+). It functions in the pathway alkaloid biosynthesis; nicotine biosynthesis. Its function is as follows. Involved in the biosynthesis of pyridine alkaloid natural products, leading mainly to the production of anabasine, anatabine, nicotine and nornicotine, effective deterrents against herbivores with antiparasitic and pesticide properties (neurotoxins); nornicotine serves as the precursor in the synthesis of the carcinogen compound N'-nitrosonornicotine (NNN). Catalyzes the demethylation of nicotine to form nornicotine. The protein is Nicotine N-demethylase CYP82E4 of Nicotiana tabacum (Common tobacco).